A 512-amino-acid chain; its full sequence is ATP synthase subunit beta 2 (512 aa).

Position 174–181 (174–181) interacts with ATP; sequence GGAGVGKT. The segment covering 479 to 494 has biased composition (basic and acidic residues); sequence RRKEEAAREADARRDA. Residues 479–512 are disordered; that stretch reads RRKEEAAREADARRDAAAGAASGSAGPQGAQHGR.

The protein belongs to the ATPase alpha/beta chains family. In terms of assembly, F-type ATPases have 2 components, CF(1) - the catalytic core - and CF(0) - the membrane proton channel. CF(1) has five subunits: alpha(3), beta(3), gamma(1), delta(1), epsilon(1). CF(0) has three main subunits: a(1), b(2) and c(9-12). The alpha and beta chains form an alternating ring which encloses part of the gamma chain. CF(1) is attached to CF(0) by a central stalk formed by the gamma and epsilon chains, while a peripheral stalk is formed by the delta and b chains.

The protein resides in the cell inner membrane. The catalysed reaction is ATP + H2O + 4 H(+)(in) = ADP + phosphate + 5 H(+)(out). Functionally, produces ATP from ADP in the presence of a proton gradient across the membrane. The catalytic sites are hosted primarily by the beta subunits. The sequence is that of ATP synthase subunit beta 2 from Burkholderia thailandensis (strain ATCC 700388 / DSM 13276 / CCUG 48851 / CIP 106301 / E264).